Reading from the N-terminus, the 179-residue chain is Molybdopterin synthase catalytic subunit (179 aa).

A compositionally biased stretch (polar residues) spans 1–10 (MTTSEDQTTP). The segment at 1–21 (MTTSEDQTTPAHLDPKTYPRH) is disordered. Residues 127 to 128 (HR), lysine 143, and 150 to 152 (KRE) contribute to the substrate site.

It belongs to the MoaE family. MOCS2B subfamily. Heterotetramer; composed of 2 small (MOCS2A) and 2 large (MOCS2B) subunits.

It is found in the cytoplasm. It catalyses the reaction 2 [molybdopterin-synthase sulfur-carrier protein]-C-terminal-Gly-aminoethanethioate + cyclic pyranopterin phosphate + H2O = molybdopterin + 2 [molybdopterin-synthase sulfur-carrier protein]-C-terminal Gly-Gly + 2 H(+). It participates in cofactor biosynthesis; molybdopterin biosynthesis. Catalytic subunit of the molybdopterin synthase complex, a complex that catalyzes the conversion of precursor Z into molybdopterin. Acts by mediating the incorporation of 2 sulfur atoms from thiocarboxylated MOCS2A into precursor Z to generate a dithiolene group. This Aspergillus oryzae (strain ATCC 42149 / RIB 40) (Yellow koji mold) protein is Molybdopterin synthase catalytic subunit.